A 207-amino-acid polypeptide reads, in one-letter code: Guanylate kinase (207 aa).

Positions 6–185 (GLLIVLSGPS…AKNRIQCIVE (180 aa)) constitute a Guanylate kinase-like domain. 13-20 (GPSGVGKG) lines the ATP pocket.

Belongs to the guanylate kinase family.

It is found in the cytoplasm. It catalyses the reaction GMP + ATP = GDP + ADP. Its function is as follows. Essential for recycling GMP and indirectly, cGMP. The protein is Guanylate kinase of Staphylococcus aureus (strain USA300).